A 177-amino-acid polypeptide reads, in one-letter code: Large ribosomal subunit protein uL6 (177 aa).

It belongs to the universal ribosomal protein uL6 family. As to quaternary structure, part of the 50S ribosomal subunit.

In terms of biological role, this protein binds to the 23S rRNA, and is important in its secondary structure. It is located near the subunit interface in the base of the L7/L12 stalk, and near the tRNA binding site of the peptidyltransferase center. This Idiomarina loihiensis (strain ATCC BAA-735 / DSM 15497 / L2-TR) protein is Large ribosomal subunit protein uL6.